The sequence spans 150 residues: 3-dehydroquinate dehydratase (150 aa).

Tyr26 (proton acceptor) is an active-site residue. Residues Asn77, His83, and Asp90 each coordinate substrate. His103 serves as the catalytic Proton donor. Substrate is bound by residues 104–105 (IS) and Arg114.

The protein belongs to the type-II 3-dehydroquinase family. In terms of assembly, homododecamer.

It catalyses the reaction 3-dehydroquinate = 3-dehydroshikimate + H2O. Its pathway is metabolic intermediate biosynthesis; chorismate biosynthesis; chorismate from D-erythrose 4-phosphate and phosphoenolpyruvate: step 3/7. Its function is as follows. Catalyzes a trans-dehydration via an enolate intermediate. This chain is 3-dehydroquinate dehydratase, found in Buchnera aphidicola subsp. Acyrthosiphon pisum (strain 5A).